The following is a 476-amino-acid chain: Proline--tRNA ligase (476 aa).

Belongs to the class-II aminoacyl-tRNA synthetase family. ProS type 3 subfamily. In terms of assembly, homodimer.

Its subcellular location is the cytoplasm. The catalysed reaction is tRNA(Pro) + L-proline + ATP = L-prolyl-tRNA(Pro) + AMP + diphosphate. Its function is as follows. Catalyzes the attachment of proline to tRNA(Pro) in a two-step reaction: proline is first activated by ATP to form Pro-AMP and then transferred to the acceptor end of tRNA(Pro). The polypeptide is Proline--tRNA ligase (Cenarchaeum symbiosum (strain A)).